We begin with the raw amino-acid sequence, 1437 residues long: Myomesin-3 (1437 aa).

The disordered stretch occupies residues 1-49 (MTLPHSLGGAGDPRPPQAMEVHRLEHRQEEEQKEERQHSLRMGSSVRRR). Residues 20–38 (EVHRLEHRQEEEQKEERQH) show a composition bias toward basic and acidic residues. A coiled-coil region spans residues 120–149 (RLLRQRRDWKTLRRRTEEKVQEAKELRELC). Ig-like C2-type domains are found at residues 154-246 (PWFW…AKVL) and 269-361 (PSVE…TYVL). Fibronectin type-III domains are found at residues 375-469 (SPLN…VMGD), 503-598 (PPTN…LRGP), 604-696 (PPAQ…VKQA), 702-797 (APYG…CKEW), and 804-899 (PPYD…LEDK). 2 consecutive Ig-like C2-type domains span residues 1120–1205 (PYFE…LDLT) and 1334–1423 (AKVV…VTIS).

Homodimer.

Its subcellular location is the cytoplasm. It localises to the myofibril. The protein resides in the sarcomere. The protein localises to the m line. In terms of biological role, may link the intermediate filament cytoskeleton to the M-disk of the myofibrils in striated muscle. The polypeptide is Myomesin-3 (MYOM3) (Homo sapiens (Human)).